We begin with the raw amino-acid sequence, 91 residues long: Cell division protein CrgA (91 aa).

Positions 1–24 (MPKSKITTEGSALPQSSSSATNRT) are enriched in polar residues. The segment at 1-28 (MPKSKITTEGSALPQSSSSATNRTPVKI) is disordered. 2 consecutive transmembrane segments (helical) span residues 38–58 (IAIM…NYLA) and 68–88 (LGPW…LMTM).

Belongs to the CrgA family.

It is found in the cell membrane. Its function is as follows. Involved in cell division. This chain is Cell division protein CrgA, found in Corynebacterium aurimucosum (strain ATCC 700975 / DSM 44827 / CIP 107346 / CN-1) (Corynebacterium nigricans).